The primary structure comprises 334 residues: Formamidase (334 aa).

In terms of domain architecture, CN hydrolase spans 14-260 (MLMGLVQYPV…WEIVTAEVFP (247 aa)). Catalysis depends on E60, which acts as the Proton acceptor. K133 functions as the Proton donor in the catalytic mechanism. The active-site Nucleophile is C166.

The protein belongs to the carbon-nitrogen hydrolase superfamily. Aliphatic amidase family.

The catalysed reaction is formamide + H2O = formate + NH4(+). Is an aliphatic amidase with a restricted substrate specificity, as it only hydrolyzes formamide. The sequence is that of Formamidase from Nitratidesulfovibrio vulgaris (strain DP4) (Desulfovibrio vulgaris).